We begin with the raw amino-acid sequence, 546 residues long: ATP synthase subunit alpha (546 aa).

173-180 contacts ATP; it reads GDRQTGKT. Positions 520–546 are disordered; sequence VDKKTAPKSVTPVDQEQIKAGKAQEKK. Positions 535 to 546 are enriched in basic and acidic residues; that stretch reads EQIKAGKAQEKK.

It belongs to the ATPase alpha/beta chains family. As to quaternary structure, F-type ATPases have 2 components, CF(1) - the catalytic core - and CF(0) - the membrane proton channel. CF(1) has five subunits: alpha(3), beta(3), gamma(1), delta(1), epsilon(1). CF(0) has three main subunits: a(1), b(2) and c(9-12). The alpha and beta chains form an alternating ring which encloses part of the gamma chain. CF(1) is attached to CF(0) by a central stalk formed by the gamma and epsilon chains, while a peripheral stalk is formed by the delta and b chains.

It is found in the cell membrane. It carries out the reaction ATP + H2O + 4 H(+)(in) = ADP + phosphate + 5 H(+)(out). Produces ATP from ADP in the presence of a proton gradient across the membrane. The alpha chain is a regulatory subunit. The polypeptide is ATP synthase subunit alpha (Bifidobacterium animalis subsp. lactis (strain AD011)).